A 311-amino-acid polypeptide reads, in one-letter code: Olfactory receptor 5L2 (311 aa).

Topologically, residues 1–25 (MGKENCTTVAEFILLGLSDVPELRV) are extracellular. N-linked (GlcNAc...) asparagine glycosylation occurs at asparagine 5. Residues 26 to 46 (CLFLLFLLIYGVTLLANLGMT) traverse the membrane as a helical segment. The Cytoplasmic portion of the chain corresponds to 47–54 (ALIQVSSR). A helical membrane pass occupies residues 55-75 (LHTPVYFFLSHLSFVDFCYSS). Over 76 to 99 (IIVPKMLANIFNKDKAISFLGCMV) the chain is Extracellular. Cysteine 97 and cysteine 189 are oxidised to a cystine. The chain crosses the membrane as a helical span at residues 100–120 (QFYLFCTCGVTEVFLLAVMAY). At 121–139 (DRFVAICNPLLYMVTMSQK) the chain is on the cytoplasmic side. A helical transmembrane segment spans residues 140-160 (LRVELTSCCYFCGTVCSLIHS). Residues 161–196 (SLALRILFYRSNVINHFFCDLPPLLSLACSDVTVNE) are Extracellular-facing. Residue asparagine 195 is glycosylated (N-linked (GlcNAc...) asparagine). A helical membrane pass occupies residues 197-217 (TLLFLVATLNESVTIMIILTS). Residues 218–237 (YLLILTTILKIHSAESRHKA) lie on the Cytoplasmic side of the membrane. A helical transmembrane segment spans residues 238 to 258 (FSTCASHLTAITVSHGTILYI). The Extracellular portion of the chain corresponds to 259 to 271 (YCRPSSGNSGDVD). The chain crosses the membrane as a helical span at residues 272–292 (KVATVFYTVVIPMLNPLIYSL). Residues 293 to 311 (RNKDVNKALRKVMGSKIHS) lie on the Cytoplasmic side of the membrane.

Belongs to the G-protein coupled receptor 1 family.

The protein resides in the cell membrane. Odorant receptor. The chain is Olfactory receptor 5L2 (OR5L2) from Homo sapiens (Human).